A 139-amino-acid chain; its full sequence is Holo-[acyl-carrier-protein] synthase (139 aa).

Residues Asp-8 and Glu-61 each contribute to the Mg(2+) site.

This sequence belongs to the P-Pant transferase superfamily. AcpS family. Requires Mg(2+) as cofactor.

The protein resides in the cytoplasm. The enzyme catalyses apo-[ACP] + CoA = holo-[ACP] + adenosine 3',5'-bisphosphate + H(+). Functionally, transfers the 4'-phosphopantetheine moiety from coenzyme A to a Ser of acyl-carrier-protein. In Rhodopseudomonas palustris (strain BisA53), this protein is Holo-[acyl-carrier-protein] synthase.